Reading from the N-terminus, the 222-residue chain is Thiamine-phosphate synthase (222 aa).

4-amino-2-methyl-5-(diphosphooxymethyl)pyrimidine-binding positions include 40–44 (QLRDK) and asparagine 81. Mg(2+) contacts are provided by aspartate 82 and aspartate 101. 4-amino-2-methyl-5-(diphosphooxymethyl)pyrimidine is bound at residue serine 120. Residue 146 to 148 (TPT) participates in 2-[(2R,5Z)-2-carboxy-4-methylthiazol-5(2H)-ylidene]ethyl phosphate binding. Lysine 149 is a binding site for 4-amino-2-methyl-5-(diphosphooxymethyl)pyrimidine. Residue glycine 178 participates in 2-[(2R,5Z)-2-carboxy-4-methylthiazol-5(2H)-ylidene]ethyl phosphate binding.

Belongs to the thiamine-phosphate synthase family. Mg(2+) serves as cofactor.

The catalysed reaction is 2-[(2R,5Z)-2-carboxy-4-methylthiazol-5(2H)-ylidene]ethyl phosphate + 4-amino-2-methyl-5-(diphosphooxymethyl)pyrimidine + 2 H(+) = thiamine phosphate + CO2 + diphosphate. The enzyme catalyses 2-(2-carboxy-4-methylthiazol-5-yl)ethyl phosphate + 4-amino-2-methyl-5-(diphosphooxymethyl)pyrimidine + 2 H(+) = thiamine phosphate + CO2 + diphosphate. It carries out the reaction 4-methyl-5-(2-phosphooxyethyl)-thiazole + 4-amino-2-methyl-5-(diphosphooxymethyl)pyrimidine + H(+) = thiamine phosphate + diphosphate. It functions in the pathway cofactor biosynthesis; thiamine diphosphate biosynthesis; thiamine phosphate from 4-amino-2-methyl-5-diphosphomethylpyrimidine and 4-methyl-5-(2-phosphoethyl)-thiazole: step 1/1. Its function is as follows. Condenses 4-methyl-5-(beta-hydroxyethyl)thiazole monophosphate (THZ-P) and 2-methyl-4-amino-5-hydroxymethyl pyrimidine pyrophosphate (HMP-PP) to form thiamine monophosphate (TMP). The polypeptide is Thiamine-phosphate synthase (Mycobacterium tuberculosis (strain ATCC 25177 / H37Ra)).